Here is a 458-residue protein sequence, read N- to C-terminus: Exodeoxyribonuclease 7 large subunit (458 aa).

This sequence belongs to the XseA family. As to quaternary structure, heterooligomer composed of large and small subunits.

Its subcellular location is the cytoplasm. The catalysed reaction is Exonucleolytic cleavage in either 5'- to 3'- or 3'- to 5'-direction to yield nucleoside 5'-phosphates.. Bidirectionally degrades single-stranded DNA into large acid-insoluble oligonucleotides, which are then degraded further into small acid-soluble oligonucleotides. This Serratia proteamaculans (strain 568) protein is Exodeoxyribonuclease 7 large subunit.